A 67-amino-acid polypeptide reads, in one-letter code: Small ribosomal subunit protein bS21 (67 aa).

The protein belongs to the bacterial ribosomal protein bS21 family.

This Hydrogenobaculum sp. (strain Y04AAS1) protein is Small ribosomal subunit protein bS21.